Reading from the N-terminus, the 314-residue chain is 2,3-dihydroxyphenylpropionate/2,3-dihydroxicinnamic acid 1,2-dioxygenase (314 aa).

His115 functions as the Proton donor in the catalytic mechanism. His179 serves as the catalytic Proton acceptor.

This sequence belongs to the LigB/MhpB extradiol dioxygenase family. In terms of assembly, homotetramer. Fe(2+) is required as a cofactor.

The catalysed reaction is 3-(2,3-dihydroxyphenyl)propanoate + O2 = (2Z,4E)-2-hydroxy-6-oxonona-2,4-dienedioate + H(+). It carries out the reaction (2E)-3-(2,3-dihydroxyphenyl)prop-2-enoate + O2 = (2Z,4E,7E)-2-hydroxy-6-oxonona-2,4,7-trienedioate + H(+). It participates in aromatic compound metabolism; 3-phenylpropanoate degradation. Its function is as follows. Catalyzes the non-heme iron(II)-dependent oxidative cleavage of 2,3-dihydroxyphenylpropionic acid and 2,3-dihydroxicinnamic acid into 2-hydroxy-6-ketononadienedioate and 2-hydroxy-6-ketononatrienedioate, respectively. The protein is 2,3-dihydroxyphenylpropionate/2,3-dihydroxicinnamic acid 1,2-dioxygenase of Escherichia coli O139:H28 (strain E24377A / ETEC).